Here is a 156-residue protein sequence, read N- to C-terminus: Oxidized purine nucleoside triphosphate hydrolase (156 aa).

One can recognise a Nudix hydrolase domain in the interval 3–132 (TSRLYTLVLV…WFPLLLQKKK (130 aa)). Position 8 (threonine 8) interacts with 2-oxo-dATP. 8-oxo-dGTP is bound at residue lysine 23. 2-oxo-dATP is bound by residues asparagine 33 and 35–38 (FGGK). Residues glycine 36, glutamate 52, glutamate 55, glutamate 56, and glutamate 100 each contribute to the Mg(2+) site. Residues 37–58 (GKVQEGETIEDGAKRELREESG) carry the Nudix box motif. 117–120 (WPDD) lines the 2-oxo-dATP pocket.

The protein belongs to the Nudix hydrolase family. In terms of assembly, monomer. It depends on Mg(2+) as a cofactor.

The protein localises to the cytoplasm. It is found in the nucleus. The protein resides in the nucleus membrane. Its subcellular location is the cytoplasmic vesicle. It localises to the secretory vesicle. The protein localises to the acrosome. The catalysed reaction is 2-oxo-dATP + H2O = 2-oxo-dAMP + diphosphate + H(+). It catalyses the reaction 2-oxo-ATP + H2O = 2-oxo-AMP + diphosphate + H(+). The enzyme catalyses 8-oxo-dGTP + H2O = 8-oxo-dGMP + diphosphate + H(+). It carries out the reaction 8-oxo-dATP + H2O = 8-oxo-dAMP + diphosphate + H(+). The catalysed reaction is O(6)-methyl-dGTP + H2O = O(6)-methyl-dGMP + diphosphate + H(+). It catalyses the reaction N(6)-methyl-dATP + H2O = N(6)-methyl-dAMP + diphosphate + H(+). The enzyme catalyses N(6)-methyl-ATP + H2O = N(6)-methyl-AMP + diphosphate + H(+). Functionally, oxidized purine nucleoside triphosphate hydrolase which is a prominent sanitizer of the oxidized nucleotide pool. Catalyzes the hydrolysis of 2-oxo-dATP (2-hydroxy-dATP) into 2-oxo-dAMP. Also has a significant hydrolase activity toward 2-oxo-ATP, 8-oxo-dGTP and 8-oxo-dATP. Through the hydrolysis of oxidized purine nucleoside triphosphates, prevents their incorporation into DNA and the subsequent transversions A:T to C:G and G:C to T:A. Also catalyzes the hydrolysis of methylated purine nucleoside triphosphate preventing their integration into DNA. Through this antimutagenic activity protects cells from oxidative stress. The protein is Oxidized purine nucleoside triphosphate hydrolase (NUDT1) of Canis lupus familiaris (Dog).